Reading from the N-terminus, the 687-residue chain is Acetolactate synthase catalytic subunit, mitochondrial (687 aa).

A mitochondrion-targeting transit peptide spans 1–90 (MIRQSTLKNF…AEPDMDTSFV (90 aa)). Over residues 43–52 (YYSASPLPAS) the composition is skewed to low complexity. The segment at 43–68 (YYSASPLPASKRPEPAPSFNVDPLEQ) is disordered. A thiamine diphosphate-binding site is contributed by Glu139. Residues Arg241, 355–376 (HGCA…VGAR), and 407–426 (EVSP…VEGD) contribute to the FAD site. Positions 499–579 (QHQMWAAQHW…VKILILNNEE (81 aa)) are thiamine pyrophosphate binding. Residues Asp550, Asn577, and Glu579 each contribute to the Mg(2+) site.

It belongs to the TPP enzyme family. As to quaternary structure, homodimer. The acetolactate synthase complex contains the catalytic subunit ILV2 and the regulatory small subunit ILV6. Requires Mg(2+) as cofactor. The cofactor is thiamine diphosphate.

It is found in the mitochondrion. It carries out the reaction 2 pyruvate + H(+) = (2S)-2-acetolactate + CO2. The enzyme catalyses 2-oxobutanoate + pyruvate + H(+) = (S)-2-ethyl-2-hydroxy-3-oxobutanoate + CO2. The protein operates within amino-acid biosynthesis; L-isoleucine biosynthesis; L-isoleucine from 2-oxobutanoate: step 1/4. It functions in the pathway amino-acid biosynthesis; L-valine biosynthesis; L-valine from pyruvate: step 1/4. The regulatory subunit ILV6 stimulates enzymatic activity seven- to tenfold and confers sensitivity to inhibition by valine and activation by ATP. In terms of biological role, catalytic subunit of mitochondrial acetolactate synthase, which catalyzes the first of a series of common steps in the biosynthesis of the branched-chain amino acids. Catalyzes the irreversible decarboxylation of pyruvate to a bound hydroxyethyl group that then condenses with either a second pyruvate molecule to form 2-acetolactate (AL) or with 2-ketobutyrate to form 2-aceto-2-hydroxybutyrate (AHB). The first product is the precursor for valine and leucine biosynthesis, while the second leads to isoleucine. The polypeptide is Acetolactate synthase catalytic subunit, mitochondrial (ILV2) (Saccharomyces cerevisiae (strain ATCC 204508 / S288c) (Baker's yeast)).